A 219-amino-acid chain; its full sequence is 3,4-dihydroxy-2-butanone 4-phosphate synthase (219 aa).

D-ribulose 5-phosphate contacts are provided by residues arginine 28 to glutamate 29, aspartate 33, arginine 140 to threonine 144, and glutamate 164. Residue glutamate 29 participates in Mg(2+) binding. Histidine 143 is a binding site for Mg(2+).

The protein belongs to the DHBP synthase family. Homodimer. Requires Mg(2+) as cofactor. It depends on Mn(2+) as a cofactor.

The catalysed reaction is D-ribulose 5-phosphate = (2S)-2-hydroxy-3-oxobutyl phosphate + formate + H(+). Its pathway is cofactor biosynthesis; riboflavin biosynthesis; 2-hydroxy-3-oxobutyl phosphate from D-ribulose 5-phosphate: step 1/1. Catalyzes the conversion of D-ribulose 5-phosphate to formate and 3,4-dihydroxy-2-butanone 4-phosphate. The polypeptide is 3,4-dihydroxy-2-butanone 4-phosphate synthase (Methanocorpusculum labreanum (strain ATCC 43576 / DSM 4855 / Z)).